A 1048-amino-acid polypeptide reads, in one-letter code: Calcium-transporting ATPase, endoplasmic reticulum-type (1048 aa).

Residues 1–63 (MEEKPFPAWS…WRLVLEQFDD (63 aa)) lie on the Cytoplasmic side of the membrane. The chain crosses the membrane as a helical span at residues 64–84 (TLVKILLGAAFISFVLAYVNQ). Residues 85–93 (DETGESGFE) are Lumenal-facing. The helical transmembrane segment at 94–114 (AYVEPLVILWILVLNAIVGVW) threads the bilayer. The Cytoplasmic portion of the chain corresponds to 115-213 (QESNAEKALE…DCELQAKENM (99 aa)). A helical membrane pass occupies residues 214–234 (VFAGTTVVNGSCICIVVNTGM). Topologically, residues 235–267 (CTEIGKIQRQIHDASMEESDTPLKKKLDEFGNR) are lumenal. The chain crosses the membrane as a helical span at residues 268–288 (LTFAIGVVCLVVWAINYKYFL). At 289-312 (SWEVVDDWPSDFRFSFEKCAYYFK) the chain is on the cytoplasmic side. Residues 313-333 (IAVALAVAAIPEGLPSVITTC) form a helical membrane-spanning segment. 4 residues coordinate Ca(2+): Val319, Ala320, Ile322, and Glu324. The Lumenal segment spans residues 334–800 (LALGTRKMAQ…ISSNVGEVIS (467 aa)). Asp366 acts as the 4-aspartylphosphate intermediate in catalysis. 2 residues coordinate Mg(2+): Asp728 and Asp732. Ca(2+)-binding residues include Asn794 and Glu797. The helical transmembrane segment at 801–821 (IFLTAVLGIPECLIPVQLLWV) threads the bilayer. Positions 822, 825, and 826 each coordinate Ca(2+). Topologically, residues 822–862 (NLVTDGPPATALGFNPADVDIMQKPPRKNTDALINSWVFFR) are cytoplasmic. Residues 863–883 (YMVIGSYVGIATVGIFIVWYT) traverse the membrane as a helical segment. At 884–944 (QASFLGINIV…CEYFTVGKVK (61 aa)) the chain is on the lumenal side. The chain crosses the membrane as a helical span at residues 945-965 (AMTLSLSVLVAIEMFNSLNAL). Residue Glu957 coordinates Ca(2+). Topologically, residues 966–981 (SEDNSLIKMPPWRNPW) are cytoplasmic. The helical transmembrane segment at 982–1002 (LLVAMSLSFALHSVILYVPFL) threads the bilayer. The Lumenal segment spans residues 1003–1007 (ADIFG). A helical membrane pass occupies residues 1008–1028 (IVPLSLYEWLLVILLSAPVIL). At 1029–1048 (IDEVLKFVGRRRRRTKLKAA) the chain is on the cytoplasmic side.

The protein belongs to the cation transport ATPase (P-type) (TC 3.A.3) family. Type IIA subfamily. As to expression, 9-fold higher level in roots compared with leaves.

The protein localises to the endoplasmic reticulum membrane. It catalyses the reaction Ca(2+)(in) + ATP + H2O = Ca(2+)(out) + ADP + phosphate + H(+). This magnesium-dependent enzyme catalyzes the hydrolysis of ATP coupled with the translocation of calcium from the cytosol to an endomembrane compartment. This is Calcium-transporting ATPase, endoplasmic reticulum-type from Solanum lycopersicum (Tomato).